The following is a 220-amino-acid chain: NADH-quinone oxidoreductase subunit I (220 aa).

4Fe-4S ferredoxin-type domains follow at residues leucine 71 to histidine 102 and aspartate 112 to arginine 141. Cysteine 82, cysteine 85, cysteine 88, cysteine 92, cysteine 121, cysteine 124, cysteine 127, and cysteine 131 together coordinate [4Fe-4S] cluster. The tract at residues methionine 187–valine 220 is disordered. Positions proline 198–valine 220 are enriched in basic and acidic residues.

It belongs to the complex I 23 kDa subunit family. NDH-1 is composed of 14 different subunits. Subunits NuoA, H, J, K, L, M, N constitute the membrane sector of the complex. The cofactor is [4Fe-4S] cluster.

It localises to the cell inner membrane. It catalyses the reaction a quinone + NADH + 5 H(+)(in) = a quinol + NAD(+) + 4 H(+)(out). In terms of biological role, NDH-1 shuttles electrons from NADH, via FMN and iron-sulfur (Fe-S) centers, to quinones in the respiratory chain. The immediate electron acceptor for the enzyme in this species is believed to be ubiquinone. Couples the redox reaction to proton translocation (for every two electrons transferred, four hydrogen ions are translocated across the cytoplasmic membrane), and thus conserves the redox energy in a proton gradient. The chain is NADH-quinone oxidoreductase subunit I from Helicobacter pylori (strain J99 / ATCC 700824) (Campylobacter pylori J99).